We begin with the raw amino-acid sequence, 530 residues long: UDP-glucuronosyltransferase 1A8 (530 aa).

The first 25 residues, 1–25 (MARTGWTSPIPLCVSLLLTCGFAEA), serve as a signal peptide directing secretion. 3 N-linked (GlcNAc...) asparagine glycosylation sites follow: asparagine 71, asparagine 292, and asparagine 344. Residues 488-504 (VIGFLLAVVLTVAFITF) traverse the membrane as a helical segment.

It belongs to the UDP-glycosyltransferase family. In terms of assembly, homodimer. Homooligomer. Interacts with UGT1A1, UGT1A3, UGT1A4, UGT1A6, UGT1A7, UGT1A9 and UGT1A10 to form heterodimers. Isoform 1 interacts with isoform 2/i2 suggesting that oligomerization is involved in negative regulation of transferase activity by isoform 2. Isoform 1 also interacts with respective i2 isoforms of UGT1A1, UGT1A3, UGT1A4, UGT1A6, UGT1A7, UGT1A9 and UGT1A10. Expressed in kidney, colon and small intestine. Not expressed in liver. As to expression, expressed in liver, kidney, colon and small intestine.

It is found in the endoplasmic reticulum membrane. The enzyme catalyses glucuronate acceptor + UDP-alpha-D-glucuronate = acceptor beta-D-glucuronoside + UDP + H(+). It catalyses the reaction 17beta-estradiol + UDP-alpha-D-glucuronate = 17beta-estradiol 3-O-(beta-D-glucuronate) + UDP + H(+). The catalysed reaction is 17alpha-estradiol + UDP-alpha-D-glucuronate = 17alpha-estradiol 3-O-(beta-D-glucuronate) + UDP + H(+). It carries out the reaction estrone + UDP-alpha-D-glucuronate = estrone 3-O-(beta-D-glucuronate) + UDP + H(+). The enzyme catalyses 16alpha,17alpha-estriol + UDP-alpha-D-glucuronate = 16alpha,17alpha-estriol 3-O-(beta-D-glucuronate) + UDP + H(+). It catalyses the reaction 2-hydroxy-17beta-estradiol + UDP-alpha-D-glucuronate = 2-hydroxy-17beta-estradiol 3-O-(beta-D-glucuronate) + UDP + H(+). The catalysed reaction is 2-hydroxy-17beta-estradiol + UDP-alpha-D-glucuronate = 17beta-estradiol 2-O-(beta-D-glucuronate) + UDP + H(+). It carries out the reaction 2-hydroxyestrone + UDP-alpha-D-glucuronate = 2-hydroxyestrone 3-O-(beta-D-glucuronate) + UDP + H(+). The enzyme catalyses 4-hydroxy-17beta-estradiol + UDP-alpha-D-glucuronate = 4-hydroxy-17beta-estradiol 3-O-(beta-D-glucuronate) + UDP + H(+). It catalyses the reaction 4-hydroxy-17beta-estradiol + UDP-alpha-D-glucuronate = 17beta-estradiol 4-O-(beta-D-glucuronate) + UDP + H(+). The catalysed reaction is 4-hydroxyestrone + UDP-alpha-D-glucuronate = 4-hydroxyestrone 3-O-(beta-D-glucuronate) + UDP + H(+). It carries out the reaction 4-hydroxyestrone + UDP-alpha-D-glucuronate = estrone 4-O-(beta-D-glucuronate) + UDP + H(+). The enzyme catalyses 2-methoxy-17beta-estradiol + UDP-alpha-D-glucuronate = 2-methoxy-17beta-estradiol 3-O-(beta-D-glucuronate) + UDP + H(+). It catalyses the reaction 2-methoxyestrone + UDP-alpha-D-glucuronate = 2-methoxyestrone 3-O-(beta-D-glucuronate) + UDP + H(+). The catalysed reaction is 4-methoxy-17beta-estradiol + UDP-alpha-D-glucuronate = 4-methoxy-17beta-estradiol 3-O-(beta-D-glucuronate) + UDP + H(+). It carries out the reaction 4-methoxyestrone + UDP-alpha-D-glucuronate = 4-methoxyestrone 3-O-(beta-D-glucuronate) + UDP + H(+). The enzyme catalyses 17beta-hydroxy-5alpha-androstan-3-one + UDP-alpha-D-glucuronate = 5alpha-dihydrotestosterone 17-O-(beta-D-glucuronate) + UDP + H(+). It catalyses the reaction 5alpha-dihydrotestosterone 17-O-(beta-D-glucuronate) + UDP-alpha-D-glucuronate = 5alpha-dihydrotestosterone 17-O-[beta-D-glucuronosyl-(1-&gt;2)-glucuronate] + UDP + H(+). The catalysed reaction is prunetin + UDP-alpha-D-glucuronate = prunetin-4'-O-beta-D-glucuronide + UDP. It carries out the reaction prunetin + UDP-alpha-D-glucuronate = prunetin-5-O-beta-D-glucuronide + UDP. The enzyme catalyses candesartan + UDP-alpha-D-glucuronate = candesartan O-beta-D-glucuronoside + UDP. It catalyses the reaction mycophenolate + UDP-alpha-D-glucuronate = mycophenolate 7-O-beta-D-glucuronide + UDP + H(+). The catalysed reaction is (E)-ferulate + UDP-alpha-D-glucuronate = (E)-4-O-(beta-D-glucuronosyl)-ferulate + UDP + H(+). It carries out the reaction (E)-ferulate + UDP-alpha-D-glucuronate = (E)-ferulic acid beta-D-glucuronate ester + UDP. Functionally, UDP-glucuronosyltransferase (UGT) that catalyzes phase II biotransformation reactions in which lipophilic substrates are conjugated with glucuronic acid to increase the metabolite's water solubility, thereby facilitating excretion into either the urine or bile. Essential for the elimination and detoxification of drugs, xenobiotics and endogenous compounds. Catalyzes the glucuronidation of endogenous steroid hormones such as androgens and estrogens. Produces dihydrotestosterone (DHT) diglucuronide from the DHT after two subsequent glucoronidation steps. Involved in the glucuronidation of the phytochemical ferulic acid at the phenolic or the carboxylic acid group. Also catalyzes the glucuronidation of the isoflavones genistein, daidzein, glycitein, formononetin, biochanin A and prunetin, which are phytoestrogens with anticancer and cardiovascular properties. Involved in the glucuronidation of the AGTR1 angiotensin receptor antagonist caderastan, a drug which can inhibit the effect of angiotensin II. Also metabolizes mycophenolate, an immunosuppressive agent. Its function is as follows. Lacks UGT glucuronidation activity but acts as a negative regulator of isoform 1. This Homo sapiens (Human) protein is UDP-glucuronosyltransferase 1A8.